The sequence spans 365 residues: D-alanine--D-alanine ligase (365 aa).

The ATP-grasp domain maps to 135-345 (KLLLKSFNIP…YESLVDNLVS (211 aa)). 168 to 223 (KQSLNYPVIVKPAMLGSSIGISIAYNDTQIEKCIEEAFEYDLTVVVEKFMKVREIE) lines the ATP pocket. Positions 298, 312, and 314 each coordinate Mg(2+).

The protein belongs to the D-alanine--D-alanine ligase family. It depends on Mg(2+) as a cofactor. Requires Mn(2+) as cofactor.

It localises to the cytoplasm. It catalyses the reaction 2 D-alanine + ATP = D-alanyl-D-alanine + ADP + phosphate + H(+). Its pathway is cell wall biogenesis; peptidoglycan biosynthesis. Functionally, cell wall formation. The chain is D-alanine--D-alanine ligase from Borrelia hermsii (strain HS1 / DAH).